The chain runs to 494 residues: Glycerol kinase (494 aa).

An ADP-binding site is contributed by Thr-12. ATP contacts are provided by Thr-12, Thr-13, and Ser-14. Thr-12 contacts sn-glycerol 3-phosphate. Position 16 (Arg-16) interacts with ADP. Residues Arg-82, Glu-83, Tyr-134, and Asp-243 each contribute to the sn-glycerol 3-phosphate site. Residues Arg-82, Glu-83, Tyr-134, Asp-243, and Gln-244 each coordinate glycerol. Residues Thr-265 and Gly-308 each contribute to the ADP site. ATP-binding residues include Thr-265, Gly-308, Gln-312, and Gly-408. ADP-binding residues include Gly-408 and Asn-412.

This sequence belongs to the FGGY kinase family.

It carries out the reaction glycerol + ATP = sn-glycerol 3-phosphate + ADP + H(+). It functions in the pathway polyol metabolism; glycerol degradation via glycerol kinase pathway; sn-glycerol 3-phosphate from glycerol: step 1/1. Its activity is regulated as follows. Inhibited by fructose 1,6-bisphosphate (FBP). Functionally, key enzyme in the regulation of glycerol uptake and metabolism. Catalyzes the phosphorylation of glycerol to yield sn-glycerol 3-phosphate. In Marinomonas sp. (strain MWYL1), this protein is Glycerol kinase.